The chain runs to 357 residues: Fluoren-9-ol dehydrogenase (357 aa).

Residues 36 to 67 (VTGG…TWDD) and Asp-87 each bind NADP(+). Residue Tyr-198 is the Proton acceptor of the active site. Lys-202 lines the NADP(+) pocket.

The protein belongs to the short-chain dehydrogenases/reductases (SDR) family.

The catalysed reaction is 9H-fluoren-9-ol + NADP(+) = 9H-fluoren-9-one + NADPH + H(+). It carries out the reaction 9H-fluoren-9-ol + NAD(+) = 9H-fluoren-9-one + NADH + H(+). Its pathway is aromatic compound metabolism. Functionally, catalyzes the dehydrogenation of both 9-fluorenol and 1,1a-dihydroxy-1-hydro-9-fluorenone to produce 9-fluorenone and 2'-carboxy-2,3- dihydroxybiphenyl, respectively. The chain is Fluoren-9-ol dehydrogenase from Terrabacter sp. (strain DBF63).